The primary structure comprises 148 residues: Puroindoline-A (148 aa).

A signal peptide spans 1 to 19 (MKALFLIGLLALVASTAFA). Positions 20-28 (QYSEVVGSY) are excised as a propeptide. The propeptide at 147–148 (YW) is removed in mature form.

In terms of processing, five disulfide bonds are present. As to expression, endosperm and aleurone layer of developing kernels. In the aleurone layer, mainly localized to starch granules and the surface of the plasma membrane, forming a uniform layer, also abundant in the intercellular space. In the endosperm, mainly localized to starch granules and the plasma membrane, but less abundant in the intercellular space. Not found in roots or coleoptiles.

The protein resides in the membrane. Its subcellular location is the secreted. The protein localises to the extracellular space. Acts as a membranotoxin, probably through its antibacterial and antifungal activities, contributing to the defense mechanism of the plant against predators. Forms monovalent cation-selective ion channels in membranes. Has antibacterial activity against the Gram-positive bacteria S.aureus and C.michiganensis, and the Gram-negative bacteria E.coli, P.syringae pv phaseoli, A.tumefaciens and E.carotovora subsp carotovora. Acts synergistically with PINB against bacteria. Contributes to grain texture and hardness. The chain is Puroindoline-A (PINA) from Triticum aestivum (Wheat).